Consider the following 282-residue polypeptide: Pantothenate synthetase (282 aa).

Position 31-38 (31-38 (MGYLHEGH)) interacts with ATP. The active-site Proton donor is the H38. Q62 serves as a coordination point for (R)-pantoate. Q62 is a beta-alanine binding site. An ATP-binding site is contributed by 148 to 151 (GEKD). Q154 contacts (R)-pantoate. Residues V177 and 185–188 (YSSR) each bind ATP.

The protein belongs to the pantothenate synthetase family. Homodimer.

It is found in the cytoplasm. It carries out the reaction (R)-pantoate + beta-alanine + ATP = (R)-pantothenate + AMP + diphosphate + H(+). Its pathway is cofactor biosynthesis; (R)-pantothenate biosynthesis; (R)-pantothenate from (R)-pantoate and beta-alanine: step 1/1. Functionally, catalyzes the condensation of pantoate with beta-alanine in an ATP-dependent reaction via a pantoyl-adenylate intermediate. The chain is Pantothenate synthetase from Aquifex aeolicus (strain VF5).